A 227-amino-acid chain; its full sequence is MTATAPVITIDGPSGAGKGTLCKAMAEALQWHLLDSGAIYRVLALAALHHQVDISSEEALAPIAAHLDVRFISHSGEIEVILEGENVSTEIRTQDVSNTASRVAAFPRVREALLRRQRGFRELPGLIADGRDMGTVVFPDAPVKIFLDASSEERASRRMLQLQEKGFSVNFERLLSEIKERDDRDRNRAIAPLVPAADALVLDSTTMSIEQVIEIALNYAREKLALV.

12 to 20 is an ATP binding site; that stretch reads GPSGAGKGT.

Belongs to the cytidylate kinase family. Type 1 subfamily.

The protein resides in the cytoplasm. It catalyses the reaction CMP + ATP = CDP + ADP. The enzyme catalyses dCMP + ATP = dCDP + ADP. This chain is Cytidylate kinase, found in Erwinia tasmaniensis (strain DSM 17950 / CFBP 7177 / CIP 109463 / NCPPB 4357 / Et1/99).